The following is a 391-amino-acid chain: Putative 8-amino-7-oxononanoate synthase (391 aa).

R22 and H135 together coordinate substrate. Pyridoxal 5'-phosphate is bound by residues S183, 208–211 (DDAH), and 239–242 (TLSK). The residue at position 242 (K242) is an N6-(pyridoxal phosphate)lysine. T358 provides a ligand contact to substrate.

It belongs to the class-II pyridoxal-phosphate-dependent aminotransferase family. BioF subfamily. As to quaternary structure, homodimer. It depends on pyridoxal 5'-phosphate as a cofactor.

It carries out the reaction 6-carboxyhexanoyl-[ACP] + L-alanine + H(+) = (8S)-8-amino-7-oxononanoate + holo-[ACP] + CO2. It participates in cofactor biosynthesis; biotin biosynthesis. In terms of biological role, catalyzes the decarboxylative condensation of pimeloyl-[acyl-carrier protein] and L-alanine to produce 8-amino-7-oxononanoate (AON), [acyl-carrier protein], and carbon dioxide. The protein is Putative 8-amino-7-oxononanoate synthase (bioF) of Thermosynechococcus vestitus (strain NIES-2133 / IAM M-273 / BP-1).